Reading from the N-terminus, the 133-residue chain is MIIGLGSDLCNIERIQASLDRFGERFENRVFTDVERAKAARRPFTRAGTYAKRFAAKEAFSKAVGTGFKRGVFMKDIGVVNAPSGAPTLALTGGAAERLAAMIPPGHTAHIHLTLTDDHPWAQAFVIIEAIKD.

The Mg(2+) site is built by Asp8 and Glu58.

Belongs to the P-Pant transferase superfamily. AcpS family. Mg(2+) serves as cofactor.

The protein resides in the cytoplasm. The catalysed reaction is apo-[ACP] + CoA = holo-[ACP] + adenosine 3',5'-bisphosphate + H(+). Transfers the 4'-phosphopantetheine moiety from coenzyme A to a Ser of acyl-carrier-protein. In Sphingopyxis alaskensis (strain DSM 13593 / LMG 18877 / RB2256) (Sphingomonas alaskensis), this protein is Holo-[acyl-carrier-protein] synthase.